The chain runs to 532 residues: Cocaine esterase (532 aa).

A Pyrrolidone carboxylic acid modification is found at glutamine 1. A disulfide bond links cysteine 69 and cysteine 96. Serine 201 serves as the catalytic Acyl-ester intermediate. N-linked (GlcNAc...) asparagine glycosylation is present at asparagine 249. Cysteine 253 and cysteine 264 are joined by a disulfide. Active-site charge relay system residues include glutamate 318 and histidine 430. The short motif at histidine 529 to leucine 532 is the Prevents secretion from ER element.

Belongs to the type-B carboxylesterase/lipase family. Monomer.

Its subcellular location is the endoplasmic reticulum lumen. The catalysed reaction is a carboxylic ester + H2O = an alcohol + a carboxylate + H(+). It catalyses the reaction cocaine + H2O = ecgonine methyl ester + benzoate + H(+). It carries out the reaction 2-(5Z,8Z,11Z,14Z-eicosatetraenoyl)-glycerol + H2O = glycerol + (5Z,8Z,11Z,14Z)-eicosatetraenoate + H(+). The enzyme catalyses prostaglandin E2 1-glyceryl ester + H2O = prostaglandin E2 + glycerol + H(+). The catalysed reaction is prostaglandin F2alpha 1-glyceryl ester + H2O = prostaglandin F2alpha + glycerol + H(+). In terms of biological role, involved in the detoxification of xenobiotics and in the activation of ester and amide prodrugs. Converts monoacylglycerides to free fatty acids and glycerol. Hydrolyzes of 2-arachidonoylglycerol and prostaglandins. The protein is Cocaine esterase (CES2) of Oryctolagus cuniculus (Rabbit).